The primary structure comprises 336 residues: Anthranilate phosphoribosyltransferase (336 aa).

Residues Gly82, 85–86 (GD), Thr90, 92–95 (NIST), 110–118 (KHGNRFASG), and Ser122 contribute to the 5-phospho-alpha-D-ribose 1-diphosphate site. Residue Gly82 participates in anthranilate binding. Ser94 serves as a coordination point for Mg(2+). Asn113 serves as a coordination point for anthranilate. An anthranilate-binding site is contributed by Arg168. Mg(2+) contacts are provided by Asp227 and Glu228.

Belongs to the anthranilate phosphoribosyltransferase family. In terms of assembly, homodimer. Mg(2+) serves as cofactor.

It carries out the reaction N-(5-phospho-beta-D-ribosyl)anthranilate + diphosphate = 5-phospho-alpha-D-ribose 1-diphosphate + anthranilate. Its pathway is amino-acid biosynthesis; L-tryptophan biosynthesis; L-tryptophan from chorismate: step 2/5. In terms of biological role, catalyzes the transfer of the phosphoribosyl group of 5-phosphorylribose-1-pyrophosphate (PRPP) to anthranilate to yield N-(5'-phosphoribosyl)-anthranilate (PRA). The polypeptide is Anthranilate phosphoribosyltransferase (Desulfitobacterium hafniense (strain Y51)).